Here is a 77-residue protein sequence, read N- to C-terminus: Lantipeptide prochlorosin 4.3 (77 aa).

A propeptide spanning residues 1 to 64 is cleaved from the precursor; it reads MSEEQLKAFI…DDELEGVAGG (64 aa). Thr65 carries the 2,3-didehydrobutyrine modification. The lanthionine (Ser-Cys) cross-link spans 67 to 70; that stretch reads SGGC. The segment at residues 72–76 is a cross-link (beta-methyllanthionine (Thr-Cys)); sequence TSMFC.

In terms of processing, cross-links are proved in vitro, when coepressed in E.coli with the ProcM lanthionine synthetase. Post-translationally, the lanthionine residue has both a DL configuration (with 2S,6R stereochemistry) and a LL configuration (with 2R,6R stereochemistry). DL and LL diastomers have a 4:1 ratio. It is unknown whether nonenzymatic cyclization occur, but authors favor a model in which ProcM does generate all thioether cross-links. The beta-methyllanthionine residue has a DL configuration (with 2S,3S,6R stereochemistry). Maturation of prochlorosin involves the enzymatic conversion of Thr, and Ser into dehydrated AA and the formation of thioether bonds with cysteines. This is followed by membrane translocation and cleavage of the modified precursor.

The protein resides in the secreted. Functionally, lanthionine-containing peptide (lantipeptide) with unknown function. Does not show antibiotic activity against Lactococcus lactis 117 and Bacillus subtilis 6633 bacteria. Organisms that produce this peptide live in oligotrophic environments at very dilute concentrations, suggesting this peptide is not secreted to influence other bacteria. In Prochlorococcus marinus (strain MIT 9313), this protein is Lantipeptide prochlorosin 4.3.